The primary structure comprises 82 residues: Penaeidin-3a (82 aa).

The signal sequence occupies residues 1–19 (MRLVVCLVFLASFALVCQG). Residue Q20 is modified to Pyrrolidone carboxylic acid. Intrachain disulfides connect C51/C66, C55/C73, and C67/C74. S81 bears the Serine amide mark.

Post-translationally, the N-terminus forms pyrrolidone carboxylic acid. In terms of tissue distribution, higher expression in hemocytes and to a lesser extent in heart, testis, gills, intestine, lymphoid organ and hepatopancreas. Traces in eyes and subcuticular epithelium. Not present in the brain.

Its subcellular location is the cytoplasmic granule. Functionally, antibacterial activity against M.luteus and E.coli bacteria. Antifungal activity against N.crassa and F.oxysporum. Presents chitin-binding activity. This Penaeus vannamei (Whiteleg shrimp) protein is Penaeidin-3a.